The sequence spans 56 residues: Large ribosomal subunit protein bL32 (56 aa).

The protein belongs to the bacterial ribosomal protein bL32 family.

This Edwardsiella ictaluri (strain 93-146) protein is Large ribosomal subunit protein bL32.